Here is a 299-residue protein sequence, read N- to C-terminus: Pyrroline-5-carboxylate reductase 2 (299 aa).

The protein belongs to the pyrroline-5-carboxylate reductase family. In terms of assembly, homodecamer; composed of 5 homodimers.

The catalysed reaction is L-proline + NADP(+) = (S)-1-pyrroline-5-carboxylate + NADPH + 2 H(+). The enzyme catalyses L-proline + NAD(+) = (S)-1-pyrroline-5-carboxylate + NADH + 2 H(+). It functions in the pathway amino-acid biosynthesis; L-proline biosynthesis; L-proline from L-glutamate 5-semialdehyde: step 1/1. This is Pyrroline-5-carboxylate reductase 2 (pycr2) from Dictyostelium discoideum (Social amoeba).